We begin with the raw amino-acid sequence, 370 residues long: Actin-related protein 2/3 complex subunit 1A (370 aa).

WD repeat units follow at residues 6–45 (FLLE…WVKA), 50–89 (EHNG…WKPT), 140–179 (PIRS…VDEK), 202–241 (GTGG…QVST), 244–284 (TEFL…TFVS), and 322–365 (LHQN…SSIQ).

Belongs to the WD repeat ARPC1 family. Probable component of the Arp2/3 complex in which it may replace ARPC1B.

It localises to the cytoplasm. The protein resides in the cytoskeleton. Its subcellular location is the nucleus. In terms of biological role, probably functions as a component of the Arp2/3 complex which is involved in regulation of actin polymerization and together with an activating nucleation-promoting factor (NPF) mediates the formation of branched actin networks. In addition to its role in the cytoplasmic cytoskeleton, the Arp2/3 complex also promotes actin polymerization in the nucleus, thereby regulating gene transcription and repair of damaged DNA. The chain is Actin-related protein 2/3 complex subunit 1A (ARPC1A) from Bos taurus (Bovine).